We begin with the raw amino-acid sequence, 217 residues long: Cytochrome c biogenesis ATP-binding export protein CcmA (217 aa).

The 210-residue stretch at 6–215 (FSAKNLACVR…HLDQFAVAEE (210 aa)) folds into the ABC transporter domain. 38 to 45 (GPNGSGKS) contributes to the ATP binding site.

It belongs to the ABC transporter superfamily. CcmA exporter (TC 3.A.1.107) family. As to quaternary structure, the complex is composed of two ATP-binding proteins (CcmA) and two transmembrane proteins (CcmB).

The protein resides in the cell inner membrane. It catalyses the reaction heme b(in) + ATP + H2O = heme b(out) + ADP + phosphate + H(+). In terms of biological role, part of the ABC transporter complex CcmAB involved in the biogenesis of c-type cytochromes; once thought to export heme, this seems not to be the case, but its exact role is uncertain. Responsible for energy coupling to the transport system. The protein is Cytochrome c biogenesis ATP-binding export protein CcmA of Paramagnetospirillum magneticum (strain ATCC 700264 / AMB-1) (Magnetospirillum magneticum).